Here is a 623-residue protein sequence, read N- to C-terminus: Translation initiation factor IF-2 (623 aa).

The segment covering 1 to 18 has biased composition (low complexity); the sequence is MTLNKKTNNENSSKTTPK. 2 disordered regions span residues 1-21 and 92-115; these read MTLN…KLSK and PQKE…KLQA. Residues 125–293 enclose the tr-type G domain; it reads KTPPIVTIMG…ILLFSEIQNL (169 aa). Residues 134–141 are G1; that stretch reads GHVDHGKT. 134 to 141 provides a ligand contact to GTP; the sequence is GHVDHGKT. A G2 region spans residues 159-163; sequence GITQH. Residues 180-183 are G3; sequence DTPG. GTP is bound by residues 180–184 and 234–237; these read DTPGH and NKVD. The interval 234–237 is G4; it reads NKVD. The tract at residues 270-272 is G5; that stretch reads SAL.

It belongs to the TRAFAC class translation factor GTPase superfamily. Classic translation factor GTPase family. IF-2 subfamily.

The protein resides in the cytoplasm. In terms of biological role, one of the essential components for the initiation of protein synthesis. Protects formylmethionyl-tRNA from spontaneous hydrolysis and promotes its binding to the 30S ribosomal subunits. Also involved in the hydrolysis of GTP during the formation of the 70S ribosomal complex. The protein is Translation initiation factor IF-2 of Aster yellows witches'-broom phytoplasma (strain AYWB).